The following is a 72-amino-acid chain: Translation initiation factor IF-1 (72 aa).

An S1-like domain is found at 1–72 (MSKEGKITLK…TRGRIIYRIS (72 aa)).

The protein belongs to the IF-1 family. As to quaternary structure, component of the 30S ribosomal translation pre-initiation complex which assembles on the 30S ribosome in the order IF-2 and IF-3, IF-1 and N-formylmethionyl-tRNA(fMet); mRNA recruitment can occur at any time during PIC assembly.

The protein resides in the cytoplasm. One of the essential components for the initiation of protein synthesis. Stabilizes the binding of IF-2 and IF-3 on the 30S subunit to which N-formylmethionyl-tRNA(fMet) subsequently binds. Helps modulate mRNA selection, yielding the 30S pre-initiation complex (PIC). Upon addition of the 50S ribosomal subunit IF-1, IF-2 and IF-3 are released leaving the mature 70S translation initiation complex. The sequence is that of Translation initiation factor IF-1 from Malacoplasma penetrans (strain HF-2) (Mycoplasma penetrans).